The primary structure comprises 247 residues: Uridylate kinase (247 aa).

Residue 18-21 coordinates ATP; that stretch reads KLSG. Residue glycine 60 coordinates UMP. Glycine 61 and arginine 65 together coordinate ATP. UMP-binding positions include aspartate 80 and 141–148; that span reads TGNPFFTT. Residues threonine 168, tyrosine 174, and aspartate 177 each coordinate ATP.

Belongs to the UMP kinase family. Homohexamer.

Its subcellular location is the cytoplasm. It carries out the reaction UMP + ATP = UDP + ADP. It participates in pyrimidine metabolism; CTP biosynthesis via de novo pathway; UDP from UMP (UMPK route): step 1/1. Its activity is regulated as follows. Inhibited by UTP. Its function is as follows. Catalyzes the reversible phosphorylation of UMP to UDP. The protein is Uridylate kinase of Pseudomonas putida (strain ATCC 47054 / DSM 6125 / CFBP 8728 / NCIMB 11950 / KT2440).